The following is a 177-amino-acid chain: Phosphatidylglycerol/phosphatidylinositol transfer protein (177 aa).

The N-terminal stretch at 1 to 17 (MRLSAAVIALLSTSAAA) is a signal peptide. A propeptide spanning residues 18 to 30 (FSVYRENSVSAND) is cleaved from the precursor.

The protein belongs to the NPC2 family. As to quaternary structure, monomer.

Catalyzes the intermembrane transfer of phosphatidylglycerol and phosphatidylinositol. The chain is Phosphatidylglycerol/phosphatidylinositol transfer protein (npc-2) from Neurospora crassa (strain ATCC 24698 / 74-OR23-1A / CBS 708.71 / DSM 1257 / FGSC 987).